Reading from the N-terminus, the 686-residue chain is Bromodomain-containing factor 1 (686 aa).

Disordered stretches follow at residues methionine 1 to leucine 69 and asparagine 85 to proline 150. Low complexity predominate over residues asparagine 9 to asparagine 25. Over residues glutamine 99–lysine 120 the composition is skewed to basic and acidic residues. The segment covering glutamate 130–proline 139 has biased composition (pro residues). The Bromo 1 domain maps to proline 145–methionine 254. Phosphoserine is present on serine 270. Residues glutamine 283 to tyrosine 304 are disordered. The span at glycine 287–proline 296 shows a compositional bias: basic residues. The 110-residue stretch at lysine 312–arginine 421 folds into the Bromo 2 domain. Disordered regions lie at residues leucine 424–serine 447, isoleucine 486–lysine 523, serine 594–arginine 636, and aspartate 649–glutamate 686. Position 429 is a phosphoserine (serine 429). The span at aspartate 438–serine 447 shows a compositional bias: acidic residues. Positions alanine 460–arginine 499 form a coiled coil. Positions lysine 488 to serine 507 are enriched in basic residues. Residues arginine 518–serine 598 enclose the NET domain. 2 stretches are compositionally biased toward polar residues: residues serine 594–glycine 620 and serine 652–phenylalanine 671. Serine 615 and serine 659 each carry phosphoserine. Acidic residues predominate over residues serine 675–glutamate 686.

The protein belongs to the BET family. Interacts with the TFIID subunit TAF7 and with acetylated histones H3 and H4. Phosphorylated by the casein kinase CK2 complex.

It is found in the nucleus. In terms of biological role, transcription factor involved in the expression of a broad class of genes including snRNAs. Required for sporulation and DNA-damage repair. Prevents the spreading of SIR silencing at telomeres and protects histone H4, but not H3, from deacetylation. The polypeptide is Bromodomain-containing factor 1 (BDF1) (Saccharomyces cerevisiae (strain ATCC 204508 / S288c) (Baker's yeast)).